Consider the following 256-residue polypeptide: 5'-nucleotidase SurE (256 aa).

Positions 8, 9, 40, and 92 each coordinate a divalent metal cation.

It belongs to the SurE nucleotidase family. It depends on a divalent metal cation as a cofactor.

The protein localises to the cytoplasm. The enzyme catalyses a ribonucleoside 5'-phosphate + H2O = a ribonucleoside + phosphate. Nucleotidase that shows phosphatase activity on nucleoside 5'-monophosphates. This chain is 5'-nucleotidase SurE, found in Sinorhizobium medicae (strain WSM419) (Ensifer medicae).